The primary structure comprises 199 residues: GTP cyclohydrolase-2 (199 aa).

Residue 49–53 (RIHSE) participates in GTP binding. Zn(2+)-binding residues include Cys54, Cys65, and Cys67. Residues Gln70, 92-94 (EGR), and Thr114 each bind GTP. Asp126 serves as the catalytic Proton acceptor. Residue Arg128 is the Nucleophile of the active site. Thr149 and Lys154 together coordinate GTP.

This sequence belongs to the GTP cyclohydrolase II family. As to quaternary structure, homodimer. Requires Zn(2+) as cofactor.

The enzyme catalyses GTP + 4 H2O = 2,5-diamino-6-hydroxy-4-(5-phosphoribosylamino)-pyrimidine + formate + 2 phosphate + 3 H(+). It functions in the pathway cofactor biosynthesis; riboflavin biosynthesis; 5-amino-6-(D-ribitylamino)uracil from GTP: step 1/4. In terms of biological role, catalyzes the conversion of GTP to 2,5-diamino-6-ribosylamino-4(3H)-pyrimidinone 5'-phosphate (DARP), formate and pyrophosphate. The chain is GTP cyclohydrolase-2 from Blochmanniella pennsylvanica (strain BPEN).